We begin with the raw amino-acid sequence, 415 residues long: CCA-adding enzyme (415 aa).

Residues Ser52 and Arg55 each contribute to the ATP site. CTP-binding residues include Ser52 and Arg55. Mg(2+) is bound by residues Asp64, Asp66, and Asp116. ATP contacts are provided by His139, Lys159, and Tyr168. His139, Lys159, and Tyr168 together coordinate CTP.

This sequence belongs to the tRNA nucleotidyltransferase/poly(A) polymerase family. Archaeal CCA-adding enzyme subfamily. In terms of assembly, homodimer. The cofactor is Mg(2+).

The enzyme catalyses a tRNA precursor + 2 CTP + ATP = a tRNA with a 3' CCA end + 3 diphosphate. It carries out the reaction a tRNA with a 3' CCA end + 2 CTP + ATP = a tRNA with a 3' CCACCA end + 3 diphosphate. Its function is as follows. Catalyzes the addition and repair of the essential 3'-terminal CCA sequence in tRNAs without using a nucleic acid template. Adds these three nucleotides in the order of C, C, and A to the tRNA nucleotide-73, using CTP and ATP as substrates and producing inorganic pyrophosphate. tRNA 3'-terminal CCA addition is required both for tRNA processing and repair. Also involved in tRNA surveillance by mediating tandem CCA addition to generate a CCACCA at the 3' terminus of unstable tRNAs. While stable tRNAs receive only 3'-terminal CCA, unstable tRNAs are marked with CCACCA and rapidly degraded. The chain is CCA-adding enzyme from Pyrobaculum neutrophilum (strain DSM 2338 / JCM 9278 / NBRC 100436 / V24Sta) (Thermoproteus neutrophilus).